We begin with the raw amino-acid sequence, 124 residues long: Small ribosomal subunit protein uS12 (124 aa).

Asp-89 is modified (3-methylthioaspartic acid). Residues Gln-105–Ser-124 form a disordered region. The span at Lys-108–Gly-118 shows a compositional bias: basic residues.

Belongs to the universal ribosomal protein uS12 family. Part of the 30S ribosomal subunit. Contacts proteins S8 and S17. May interact with IF1 in the 30S initiation complex.

In terms of biological role, with S4 and S5 plays an important role in translational accuracy. Interacts with and stabilizes bases of the 16S rRNA that are involved in tRNA selection in the A site and with the mRNA backbone. Located at the interface of the 30S and 50S subunits, it traverses the body of the 30S subunit contacting proteins on the other side and probably holding the rRNA structure together. The combined cluster of proteins S8, S12 and S17 appears to hold together the shoulder and platform of the 30S subunit. The protein is Small ribosomal subunit protein uS12 of Mycobacterium sp. (strain JLS).